The chain runs to 2605 residues: Protein ABERRANT POLLEN TRANSMISSION 1 (2605 aa).

The signal sequence occupies residues 1-43 (MMLGLVQLLVGFVVAWEAVELVLRHGLLLSVFKLAILAALAAA). Positions 137–158 (STNKKKPAPRKPISTTTAKAKG) are disordered. Residues asparagine 232, asparagine 320, asparagine 348, asparagine 516, asparagine 587, asparagine 628, asparagine 696, asparagine 779, asparagine 1171, asparagine 1318, and asparagine 1459 are each glycosylated (N-linked (GlcNAc...) asparagine). A disordered region spans residues 305–326 (SASTVAEQKDEPSVDNKSAARS). The segment covering 311–326 (EQKDEPSVDNKSAARS) has biased composition (basic and acidic residues). Positions 1761-1818 (MSKDGALSSVSSTSQPSEPQQIKSSESPPSNGSGKPDLTSSSENALKRSNNSDSEEEG) are disordered. Residues 1768-1781 (SSVSSTSQPSEPQQ) are compositionally biased toward low complexity. Polar residues predominate over residues 1782–1812 (IKSSESPPSNGSGKPDLTSSSENALKRSNNS). Asparagine 1791, asparagine 1810, asparagine 2003, asparagine 2280, and asparagine 2291 each carry an N-linked (GlcNAc...) asparagine glycan. Disordered stretches follow at residues 2269 to 2312 (VSTT…SSFD) and 2332 to 2361 (EGQT…REDK). A compositionally biased stretch (polar residues) spans 2281 to 2300 (TSVAETNSPNNQSSKETTFA). Composition is skewed to basic and acidic residues over residues 2303–2312 (PELRRTSSFD) and 2343–2361 (DAAK…REDK). Residues asparagine 2468 and asparagine 2564 are each glycosylated (N-linked (GlcNAc...) asparagine). The tract at residues 2574-2605 (TELEVAELPPRAPGYNTDSSSDSSSAETSPKD) is disordered.

It belongs to the SABRE family. As to expression, mature pollen-specific.

Its subcellular location is the secreted. The protein resides in the golgi apparatus. In terms of biological role, may be involved in membrane trafficking. Required for tip growth in pollen tubes and root hairs. The protein is Protein ABERRANT POLLEN TRANSMISSION 1 of Zea mays (Maize).